Here is a 226-residue protein sequence, read N- to C-terminus: Triosephosphate isomerase (226 aa).

The active-site Electrophile is histidine 91. Glutamate 163 acts as the Proton acceptor in catalysis. Substrate-binding residues include glycine 169 and serine 207.

It belongs to the triosephosphate isomerase family. Homodimer.

The protein localises to the cytoplasm. The enzyme catalyses D-glyceraldehyde 3-phosphate = dihydroxyacetone phosphate. It participates in carbohydrate biosynthesis; gluconeogenesis. Its pathway is carbohydrate degradation; glycolysis; D-glyceraldehyde 3-phosphate from glycerone phosphate: step 1/1. In terms of biological role, involved in the gluconeogenesis. Catalyzes stereospecifically the conversion of dihydroxyacetone phosphate (DHAP) to D-glyceraldehyde-3-phosphate (G3P). This chain is Triosephosphate isomerase, found in Rhizobium etli (strain ATCC 51251 / DSM 11541 / JCM 21823 / NBRC 15573 / CFN 42).